A 452-amino-acid chain; its full sequence is MILNIKAPENIVLKPTITVFGVGGAGSNAVNNMIHANLQGANFVVANTDAQSLEHSLCINKIQLGVSTTRGLGAGASPEVGALAAQESENEIRSSLENSNMVFITAGMGGGTGTGSAPIIARIAKELGILTVGVVTKPFHFEGGHRMKTADKGLIELQQFVDTLIVIPNQNLFRIANEQTTFADAFKMADDVLHAGVRGVTDLMIMPGLINLDFADIKAVMSEMGKAMMGTGEDSGEDRAIKAAESAISNPLLDHSSMCGARGVLINITGGPDMTLFEVDNAANRIREEVDNIDANIIFGSTFNPELKGIIRVSVVATGIDADKVPKYKLAIDENTNTVPKETYNESMIQHTQIEEIPAFNNYSTENIEITDSSIKQNYTENEQELRLHVNAVNKPENNSQKSSFLWKIWGSLRASNNQTLERKNVIVNTLDQDNKESDIHDIPAFLRKKRD.

Residues 24–28 (GAGSN), 111–113 (GTG), Glu-142, Arg-146, and Asp-190 contribute to the GTP site.

Belongs to the FtsZ family. In terms of assembly, homodimer. Polymerizes to form a dynamic ring structure in a strictly GTP-dependent manner. Interacts directly with several other division proteins.

The protein localises to the cytoplasm. In terms of biological role, essential cell division protein that forms a contractile ring structure (Z ring) at the future cell division site. The regulation of the ring assembly controls the timing and the location of cell division. One of the functions of the FtsZ ring is to recruit other cell division proteins to the septum to produce a new cell wall between the dividing cells. Binds GTP and shows GTPase activity. The protein is Cell division protein FtsZ of Rickettsia typhi (strain ATCC VR-144 / Wilmington).